The following is a 76-amino-acid chain: Attractin (76 aa).

The signal sequence occupies residues 1–18; sequence MKVAIIILSLALVAAVFA. Cystine bridges form between cysteine 22-cysteine 59, cysteine 31-cysteine 51, and cysteine 38-cysteine 44. Asparagine 26 carries an N-linked (GlcNAc...) asparagine glycan.

In terms of assembly, binds to temptin and enticin. Produced by the albumen gland of the egg cordons.

It is found in the secreted. Water-borne pheromone that attract the marine mollusk Aplysia into breeding aggregations and coordinate male and female reproductive behavior within the aggregation. The protein is Attractin (ATT) of Aplysia californica (California sea hare).